The following is a 282-amino-acid chain: Ribosomal RNA small subunit methyltransferase A (282 aa).

S-adenosyl-L-methionine is bound by residues N28, L30, G55, E77, D103, and N122.

Belongs to the class I-like SAM-binding methyltransferase superfamily. rRNA adenine N(6)-methyltransferase family. RsmA subfamily.

The protein resides in the cytoplasm. It catalyses the reaction adenosine(1518)/adenosine(1519) in 16S rRNA + 4 S-adenosyl-L-methionine = N(6)-dimethyladenosine(1518)/N(6)-dimethyladenosine(1519) in 16S rRNA + 4 S-adenosyl-L-homocysteine + 4 H(+). Functionally, specifically dimethylates two adjacent adenosines (A1518 and A1519) in the loop of a conserved hairpin near the 3'-end of 16S rRNA in the 30S particle. May play a critical role in biogenesis of 30S subunits. This is Ribosomal RNA small subunit methyltransferase A from Paracoccus denitrificans (strain Pd 1222).